Here is a 283-residue protein sequence, read N- to C-terminus: Poly(3-hydroxyalkanoate) depolymerase (283 aa).

Residues proline 30–threonine 253 enclose the AB hydrolase-1 domain. The Charge relay system role is filled by serine 102.

The protein belongs to the AB hydrolase superfamily. Lipase family.

Functionally, complements a mutant that does not degrade PHA; might be a lipase. This is Poly(3-hydroxyalkanoate) depolymerase from Ectopseudomonas oleovorans (Pseudomonas oleovorans).